The primary structure comprises 446 residues: Tol-Pal system protein TolB (446 aa).

The N-terminal stretch at 1–43 (MRKLWAPNWLSRRQNANPTRDQSRHALMAWLAAALMSAGAAHA) is a signal peptide.

The protein belongs to the TolB family. In terms of assembly, the Tol-Pal system is composed of five core proteins: the inner membrane proteins TolA, TolQ and TolR, the periplasmic protein TolB and the outer membrane protein Pal. They form a network linking the inner and outer membranes and the peptidoglycan layer.

The protein resides in the periplasm. Part of the Tol-Pal system, which plays a role in outer membrane invagination during cell division and is important for maintaining outer membrane integrity. This chain is Tol-Pal system protein TolB, found in Cupriavidus metallidurans (strain ATCC 43123 / DSM 2839 / NBRC 102507 / CH34) (Ralstonia metallidurans).